We begin with the raw amino-acid sequence, 2422 residues long: Non-reducing polyketide synthase trt4 (2422 aa).

The segment at 14–196 is N-terminal acylcarrier protein transacylase domain (SAT); that stretch reads VLFGPKCPKT…HHSDHTSVVQ (183 aa). Residues 289–314 form a disordered region; the sequence is VEPPDSHHNTNTTQDSDVTTNASPLT. The span at 297–312 shows a compositional bias: polar residues; it reads NTNTTQDSDVTTNASP. Residues 329–745 enclose the Ketosynthase family 3 (KS3) domain; that stretch reads TVPIAVTGMA…GSNAAIVLQE (417 aa). Active-site for beta-ketoacyl synthase activity residues include Cys-494, His-629, and His-668. Residues 856-1121 are malonyl-CoA:ACP transacylase (MAT) domain; the sequence is LCFGGQTGNT…CPIDLSGPQA (266 aa). Catalysis depends on Ser-904, which acts as the For acyl/malonyl transferase activity. Positions 1190–1316 are N-terminal hotdog fold; sequence PSLVKLLNND…GKISISSEAN (127 aa). A PKS/mFAS DH domain is found at 1190–1495; that stretch reads PSLVKLLNND…FTCVSIQSLK (306 aa). Positions 1191 to 1494 are product template (PT) domain; the sequence is SLVKLLNNDG…TFTCVSIQSL (304 aa). His-1221 serves as the catalytic Proton acceptor; for dehydratase activity. The segment at 1345-1495 is C-terminal hotdog fold; the sequence is SSGLKRSTVY…FTCVSIQSLK (151 aa). Asp-1402 (proton donor; for dehydratase activity) is an active-site residue. The Carrier domain occupies 1535-1612; that stretch reads SRSEDGLRVV…GLVQRIFPGG (78 aa). Residue Ser-1572 is modified to O-(pantetheine 4'-phosphoryl)serine. Residues 1615 to 1636 are disordered; the sequence is AHVETHSQPPDKIGITTGDRMP. Residues 1774-2007 are methyltransferase (CMeT) domain; it reads QHASEHKLLH…GFNWVDWTDN (234 aa). The tract at residues 2036 to 2383 is thioesterase (TE) domain; the sequence is NAVAEETLVY…LAPHIPTDEY (348 aa). Catalysis depends on for thioesterase activity residues Ser-2159, Asp-2320, and His-2352.

It carries out the reaction 3 malonyl-CoA + acetyl-CoA + 2 S-adenosyl-L-methionine = 3,5-dimethylorsellinate + 2 S-adenosyl-L-homocysteine + 3 CO2 + 4 CoA. It participates in secondary metabolite biosynthesis; terpenoid biosynthesis. Its function is as follows. Non-reducing polyketide synthase; part of the gene cluster that mediates the biosynthesis of terretonin, a fungal meroterpenoid that acts as a mycotoxin. The first step of the pathway is the synthesis of 3,5-dimethylorsellinic acid (DMOA) by the polyketide synthase trt4. DMOA is then prenylated into farnesyl-DMOA by the polyprenyl transferase trt2. Methylation by the methyltransferase trt5 then leads to farnesyl-DMOA methyl ester which is further subject to epoxidation by the FAD-dependent monooxygenase trt8 to yield epoxyfarnesyl-DMOA methyl ester. Cyclization of epoxyfarnesyl-DMOA methyl ester by the terpene cyclase trt1 leads to a tetracycle intermediate which is in turn converted to preterretonin. Dehydrogenase trt9 comes next to transform preterretonin to preterrenoid. The FAD-dependent monooxygenase trt3 is then required for the C-hydroxylation at C16 of preterrenoid to yield terrenoid. The cytochrome P450 trt6 catalyzes three successive oxidations to transform terrenoid into an unstable intermediate, which then undergoes the D-ring expansion and unusual rearrangement of the methoxy group to afford the core skeleton of terretonin. Trt14 catalyzes the D-ring expansion of terretonin involving intramolecular methoxy rearrangement as well as the hydrolysis of the expanded D-ring and the methyl ester moiety. Finally, the nonheme iron-dependent dioxygenase trt7 accomplishes the last two oxidation reactions steps to complete the biosynthesis of terretonin. Terretonin C is produced via spontaneous decarboxylation of the terretonin precursor. Another shunt product of the terretonin biosynthesis is dihydrofarnesyl-DMOA, derived from epoxyfarnesyl-DMOA through hydrolysis of the epoxide. This Aspergillus terreus (strain NIH 2624 / FGSC A1156) protein is Non-reducing polyketide synthase trt4.